Reading from the N-terminus, the 241-residue chain is NAD(P)H-quinone oxidoreductase subunit K (241 aa).

[4Fe-4S] cluster is bound by residues Cys-60, Cys-61, Cys-125, and Cys-156. The segment at 220–241 is disordered; that stretch reads SSQKEKITELPEKTEITNTEKD. Basic and acidic residues predominate over residues 222–241; sequence QKEKITELPEKTEITNTEKD.

This sequence belongs to the complex I 20 kDa subunit family. NDH-1 can be composed of about 15 different subunits; different subcomplexes with different compositions have been identified which probably have different functions. [4Fe-4S] cluster serves as cofactor.

It localises to the cellular thylakoid membrane. The catalysed reaction is a plastoquinone + NADH + (n+1) H(+)(in) = a plastoquinol + NAD(+) + n H(+)(out). It carries out the reaction a plastoquinone + NADPH + (n+1) H(+)(in) = a plastoquinol + NADP(+) + n H(+)(out). Its function is as follows. NDH-1 shuttles electrons from an unknown electron donor, via FMN and iron-sulfur (Fe-S) centers, to quinones in the respiratory and/or the photosynthetic chain. The immediate electron acceptor for the enzyme in this species is believed to be plastoquinone. Couples the redox reaction to proton translocation, and thus conserves the redox energy in a proton gradient. Cyanobacterial NDH-1 also plays a role in inorganic carbon-concentration. This chain is NAD(P)H-quinone oxidoreductase subunit K, found in Prochlorococcus marinus (strain MIT 9215).